Consider the following 305-residue polypeptide: Glycine--tRNA ligase alpha subunit (305 aa).

Belongs to the class-II aminoacyl-tRNA synthetase family. Tetramer of two alpha and two beta subunits.

The protein localises to the cytoplasm. The catalysed reaction is tRNA(Gly) + glycine + ATP = glycyl-tRNA(Gly) + AMP + diphosphate. The sequence is that of Glycine--tRNA ligase alpha subunit from Streptococcus pyogenes serotype M12 (strain MGAS2096).